The chain runs to 129 residues: Chorion class A protein L11 (129 aa).

Positions 1–21 (MSTFAFLLLCVQACLIQNVYG) are cleaved as a signal peptide. A left arm region spans residues 22–64 (QCLGRGLGGCGCGGGLGGYGLGYGLGGYGGGYGYGGYGGGYYG). Positions 65–112 (GYGGEGVGNVGVAGVLPVGGVTAVGGRVPIIGGVEFGGPACAGGCVSI) are central domain. Residues 113–129 (CGHCAPTCGCGYGGLYY) are right arm.

This sequence belongs to the chorion protein family.

In terms of biological role, this protein is one of many from the eggshell of the silk moth. This chain is Chorion class A protein L11, found in Bombyx mori (Silk moth).